A 452-amino-acid polypeptide reads, in one-letter code: Bifunctional protein GlmU (452 aa).

Residues 1-232 (MTSRTSLTIV…EDEVRGINTK (232 aa)) form a pyrophosphorylase region. UDP-N-acetyl-alpha-D-glucosamine contacts are provided by residues 11 to 14 (LAAG), Lys25, Gln78, and 83 to 84 (GT). Mg(2+) is bound at residue Asp108. 4 residues coordinate UDP-N-acetyl-alpha-D-glucosamine: Gly144, Glu158, Asn173, and Asn230. A Mg(2+)-binding site is contributed by Asn230. The interval 233-253 (AQLAEAEAVMQARLRQAALDA) is linker. The segment at 254–452 (GVTMIAPETV…KTRGKTRPAK (199 aa)) is N-acetyltransferase. Residues Arg319 and Lys337 each coordinate UDP-N-acetyl-alpha-D-glucosamine. The Proton acceptor role is filled by His349. Residues Tyr352 and Asn363 each contribute to the UDP-N-acetyl-alpha-D-glucosamine site. Acetyl-CoA-binding positions include Ala366, 372-373 (NY), Ser391, Ser409, and Arg426.

The protein in the N-terminal section; belongs to the N-acetylglucosamine-1-phosphate uridyltransferase family. This sequence in the C-terminal section; belongs to the transferase hexapeptide repeat family. In terms of assembly, homotrimer. The cofactor is Mg(2+).

It is found in the cytoplasm. The catalysed reaction is alpha-D-glucosamine 1-phosphate + acetyl-CoA = N-acetyl-alpha-D-glucosamine 1-phosphate + CoA + H(+). It carries out the reaction N-acetyl-alpha-D-glucosamine 1-phosphate + UTP + H(+) = UDP-N-acetyl-alpha-D-glucosamine + diphosphate. Its pathway is nucleotide-sugar biosynthesis; UDP-N-acetyl-alpha-D-glucosamine biosynthesis; N-acetyl-alpha-D-glucosamine 1-phosphate from alpha-D-glucosamine 6-phosphate (route II): step 2/2. It functions in the pathway nucleotide-sugar biosynthesis; UDP-N-acetyl-alpha-D-glucosamine biosynthesis; UDP-N-acetyl-alpha-D-glucosamine from N-acetyl-alpha-D-glucosamine 1-phosphate: step 1/1. The protein operates within bacterial outer membrane biogenesis; LPS lipid A biosynthesis. In terms of biological role, catalyzes the last two sequential reactions in the de novo biosynthetic pathway for UDP-N-acetylglucosamine (UDP-GlcNAc). The C-terminal domain catalyzes the transfer of acetyl group from acetyl coenzyme A to glucosamine-1-phosphate (GlcN-1-P) to produce N-acetylglucosamine-1-phosphate (GlcNAc-1-P), which is converted into UDP-GlcNAc by the transfer of uridine 5-monophosphate (from uridine 5-triphosphate), a reaction catalyzed by the N-terminal domain. This is Bifunctional protein GlmU from Rhodopseudomonas palustris (strain BisA53).